The sequence spans 74 residues: Peptide BmKb2 (74 aa).

Positions 1–22 (MEIKYLLTVFLVLLIVSDHCQA) are cleaved as a signal peptide. Lys-40 bears the Lysine amide mark. Residues 46–74 (DLNGQIDHFKNFRKRDAELEELLSKLPIY) constitute a propeptide that is removed on maturation.

Belongs to the non-disulfide-bridged peptide (NDBP) superfamily. Short antimicrobial peptide (group 4) family.

Its subcellular location is the secreted. The protein localises to the target cell membrane. In terms of biological role, antibacterial peptide. This peptide gene is up-regulated at the transcriptional level after the venom gland is challenged by Gram-positive bacteria. The protein is Peptide BmKb2 of Olivierus martensii (Manchurian scorpion).